We begin with the raw amino-acid sequence, 70 residues long: Large ribosomal subunit protein bL31 (70 aa).

Zn(2+) is bound by residues C16, C18, C37, and C40.

It belongs to the bacterial ribosomal protein bL31 family. Type A subfamily. In terms of assembly, part of the 50S ribosomal subunit. Zn(2+) is required as a cofactor.

Its function is as follows. Binds the 23S rRNA. This is Large ribosomal subunit protein bL31 from Klebsiella pneumoniae (strain 342).